A 165-amino-acid polypeptide reads, in one-letter code: Phosphopantetheine adenylyltransferase (165 aa).

Residue Thr-10 coordinates substrate. ATP is bound by residues 10-11 (TF) and His-18. Positions 42, 75, and 89 each coordinate substrate. Residues 90-92 (GVR), Glu-100, and 125-131 (VSFISSS) contribute to the ATP site.

The protein belongs to the bacterial CoaD family. Homohexamer. Mg(2+) serves as cofactor.

It is found in the cytoplasm. The enzyme catalyses (R)-4'-phosphopantetheine + ATP + H(+) = 3'-dephospho-CoA + diphosphate. It functions in the pathway cofactor biosynthesis; coenzyme A biosynthesis; CoA from (R)-pantothenate: step 4/5. Reversibly transfers an adenylyl group from ATP to 4'-phosphopantetheine, yielding dephospho-CoA (dPCoA) and pyrophosphate. This Buchnera aphidicola subsp. Acyrthosiphon pisum (strain 5A) protein is Phosphopantetheine adenylyltransferase.